The following is a 428-amino-acid chain: Aspartate--tRNA(Asp) ligase (428 aa).

L-aspartate is bound at residue Glu-166. The interval 188–191 is aspartate; sequence QLYK. Arg-210 contributes to the L-aspartate binding site. ATP contacts are provided by residues 210–212, 218–220, and Glu-351; these read RAE and RHL. Mg(2+) is bound by residues Glu-351 and Ser-354. Residues Ser-354 and Arg-358 each contribute to the L-aspartate site. Residue 399–402 coordinates ATP; the sequence is GLER.

The protein belongs to the class-II aminoacyl-tRNA synthetase family. Type 2 subfamily. Homodimer. The cofactor is Mg(2+).

It localises to the cytoplasm. The enzyme catalyses tRNA(Asp) + L-aspartate + ATP = L-aspartyl-tRNA(Asp) + AMP + diphosphate. Catalyzes the attachment of L-aspartate to tRNA(Asp) in a two-step reaction: L-aspartate is first activated by ATP to form Asp-AMP and then transferred to the acceptor end of tRNA(Asp). The chain is Aspartate--tRNA(Asp) ligase from Thermoplasma acidophilum (strain ATCC 25905 / DSM 1728 / JCM 9062 / NBRC 15155 / AMRC-C165).